The chain runs to 189 residues: Small ribosomal subunit protein uS5 (189 aa).

One can recognise an S5 DRBM domain in the interval 27–90; the sequence is FEERLLEAAR…EDAKKKTIRV (64 aa).

This sequence belongs to the universal ribosomal protein uS5 family. Part of the 30S ribosomal subunit. Contacts proteins S4 and S8.

Its function is as follows. With S4 and S12 plays an important role in translational accuracy. Functionally, located at the back of the 30S subunit body where it stabilizes the conformation of the head with respect to the body. The chain is Small ribosomal subunit protein uS5 from Hydrogenobaculum sp. (strain Y04AAS1).